The sequence spans 480 residues: Iroquois-class homeodomain protein IRX-1 (480 aa).

The homeobox; TALE-type DNA-binding region spans 125–188 (YGDPGRPKNA…ANARRRLKKE (64 aa)). Disordered regions lie at residues 190–268 (KVTW…QGSP), 280–354 (SPLG…PLQH), and 401–480 (PHGP…LPSA). Over residues 210 to 228 (TEGDPEKAEDDEEIDLESI) the composition is skewed to acidic residues. The segment covering 229–239 (DIDKIDEHDGD) has biased composition (basic and acidic residues). Position 241 is a phosphoserine (Ser241). Low complexity-rich tracts occupy residues 252 to 262 (PHAPAAPSALA) and 340 to 351 (HPGAHGPSAGAP). Pro residues predominate over residues 404–417 (PHLPAPPPPQPPVA).

This sequence belongs to the TALE/IRO homeobox family.

The protein resides in the nucleus. The sequence is that of Iroquois-class homeodomain protein IRX-1 (IRX1) from Homo sapiens (Human).